A 170-amino-acid polypeptide reads, in one-letter code: Cyclic pyranopterin monophosphate synthase (170 aa).

Substrate contacts are provided by residues Leu-75–His-77 and Met-113–Glu-114. Residue Asp-128 is part of the active site.

Belongs to the MoaC family. As to quaternary structure, homohexamer; trimer of dimers.

The catalysed reaction is (8S)-3',8-cyclo-7,8-dihydroguanosine 5'-triphosphate = cyclic pyranopterin phosphate + diphosphate. Its pathway is cofactor biosynthesis; molybdopterin biosynthesis. Functionally, catalyzes the conversion of (8S)-3',8-cyclo-7,8-dihydroguanosine 5'-triphosphate to cyclic pyranopterin monophosphate (cPMP). The polypeptide is Cyclic pyranopterin monophosphate synthase (Pelotomaculum thermopropionicum (strain DSM 13744 / JCM 10971 / SI)).